The following is a 182-amino-acid chain: Type-1 fimbrial protein, A chain (182 aa).

Residues 1 to 23 (MKIKTLAIVVLSALSLSSTAALA) form the signal peptide. Cys-44 and Cys-84 form a disulfide bridge.

It belongs to the fimbrial protein family.

The protein resides in the fimbrium. Fimbriae (also called pili), polar filaments radiating from the surface of the bacterium to a length of 0.5-1.5 micrometers and numbering 100-300 per cell, enable bacteria to colonize the epithelium of specific host organs. This Escherichia coli (strain K12) protein is Type-1 fimbrial protein, A chain (fimA).